Consider the following 201-residue polypeptide: ADP-ribosylation factor-like protein 4D (201 aa).

G2 carries the N-myristoyl glycine lipid modification. Residues G28–T35, D76–Q80, and N135–D138 contribute to the GTP site.

It belongs to the small GTPase superfamily. Arf family. Interacts with CYTH2; the interaction is direct and ARL4D GTP-dependent. Does not interact with ARL4D.

The protein localises to the nucleus. Its subcellular location is the nucleolus. The protein resides in the cell membrane. It localises to the cytoplasm. Small GTP-binding protein which cycles between an inactive GDP-bound and an active GTP-bound form, and the rate of cycling is regulated by guanine nucleotide exchange factors (GEF) and GTPase-activating proteins (GAP). GTP-binding protein that does not act as an allosteric activator of the cholera toxin catalytic subunit. Recruits CYTH1, CYTH2, CYTH3 and CYTH4 to the plasma membrane in GDP-bound form. The polypeptide is ADP-ribosylation factor-like protein 4D (Arl4d) (Mus musculus (Mouse)).